Reading from the N-terminus, the 457-residue chain is Cysteine--tRNA ligase (457 aa).

Cysteine 28 lines the Zn(2+) pocket. The 'HIGH' region motif lies at 30–40; that stretch reads PTVYDTAHIGN. Zn(2+) contacts are provided by cysteine 212, histidine 237, and glutamate 241. The 'KMSKS' region signature appears at 270 to 274; the sequence is KMSKS. Lysine 273 lines the ATP pocket.

The protein belongs to the class-I aminoacyl-tRNA synthetase family. As to quaternary structure, monomer. Zn(2+) serves as cofactor.

The protein localises to the cytoplasm. It carries out the reaction tRNA(Cys) + L-cysteine + ATP = L-cysteinyl-tRNA(Cys) + AMP + diphosphate. The chain is Cysteine--tRNA ligase from Wolbachia sp. subsp. Drosophila simulans (strain wRi).